The following is a 331-amino-acid chain: Thioredoxin-like fold domain-containing protein MRL7, chloroplastic (331 aa).

Residues 1–59 (MSFFAVACSAPRSSMLLTGLNSSFSDMHRSPLFVFPVTISSRSVKRFAAVSSDSVLDPE) constitute a chloroplast transit peptide. Disordered regions lie at residues 52 to 105 (SDSV…ADAV) and 141 to 160 (GVDE…EDPD). A compositionally biased stretch (acidic residues) spans 142–160 (VDEEEEEEEEMVVEEEDPD).

Component of the transcriptionally active chromosome (TAC) complexes. Interacts with FSD2 and PRDA1. Interacts with FSD3 and CITRX/TRXZ. Binds to PTAC12/HMR/PAP5. Expressed in leaves, shoots, stems, cauline leaves, flower buds, flowers and siliques.

It localises to the plastid. It is found in the chloroplast. Its subcellular location is the chloroplast stroma. The protein resides in the chloroplast nucleoid. The protein localises to the nucleus. In terms of biological role, plays an essential role in early steps of chloroplast development. Involved in the regulation of plastid gene expression. May positively regulate plastid-encoded RNA polymerase (PEP) activity through binding to FSD3 and CITRX/TRXZ. Involved in redox-mediated regulation of chloroplast development. Possesses disulfide reductase activity in vitro. Required for the proper function of the plastid transcriptional machinery and protein accumulation in thylakoid membranes. May function as molecular chaperone to ensure proper organization of the nucleoids in chloroplasts. May mediate some aspect of thylakoid structure or function that controls non-photochemical quenching (NPQ). Participates in the early light signaling events of photobody biogenesis in chloroplasts. May mediate the degradation of two repressors of chloroplast biogenesis, PIF1 and PIF3 in nucleus. Collaboratively with PTAC12/HMR/PAP5, involved in the regulation of thermoresponsive responses via the stabilization of PIF4 in the daytime to initiate thermomorphogenesis. This Arabidopsis thaliana (Mouse-ear cress) protein is Thioredoxin-like fold domain-containing protein MRL7, chloroplastic.